We begin with the raw amino-acid sequence, 276 residues long: Formamidopyrimidine-DNA glycosylase (276 aa).

Catalysis depends on proline 2, which acts as the Schiff-base intermediate with DNA. Residue glutamate 3 is the Proton donor of the active site. The Proton donor; for beta-elimination activity role is filled by lysine 58. DNA is bound by residues histidine 94, arginine 112, and arginine 157. The segment at 242-276 adopts an FPG-type zinc-finger fold; that stretch reads FVYDRAGLPCRVCGTPIKQIVQGQRSTYFCPTCQR. Arginine 266 acts as the Proton donor; for delta-elimination activity in catalysis.

This sequence belongs to the FPG family. As to quaternary structure, monomer. Zn(2+) serves as cofactor.

The enzyme catalyses Hydrolysis of DNA containing ring-opened 7-methylguanine residues, releasing 2,6-diamino-4-hydroxy-5-(N-methyl)formamidopyrimidine.. It carries out the reaction 2'-deoxyribonucleotide-(2'-deoxyribose 5'-phosphate)-2'-deoxyribonucleotide-DNA = a 3'-end 2'-deoxyribonucleotide-(2,3-dehydro-2,3-deoxyribose 5'-phosphate)-DNA + a 5'-end 5'-phospho-2'-deoxyribonucleoside-DNA + H(+). Its function is as follows. Involved in base excision repair of DNA damaged by oxidation or by mutagenic agents. Acts as a DNA glycosylase that recognizes and removes damaged bases. Has a preference for oxidized purines, such as 7,8-dihydro-8-oxoguanine (8-oxoG). Has AP (apurinic/apyrimidinic) lyase activity and introduces nicks in the DNA strand. Cleaves the DNA backbone by beta-delta elimination to generate a single-strand break at the site of the removed base with both 3'- and 5'-phosphates. This is Formamidopyrimidine-DNA glycosylase from Paraburkholderia xenovorans (strain LB400).